We begin with the raw amino-acid sequence, 953 residues long: UPF0746 protein DDB_G0281301 (953 aa).

The span at 1 to 10 shows a compositional bias: basic and acidic residues; it reads MVNNKRKEIE. The interval 1–23 is disordered; sequence MVNNKRKEIENQENDNNDDNDGL. The span at 11-21 shows a compositional bias: acidic residues; it reads NQENDNNDDND. Residues 35–69 enclose the SAP domain; sequence YDSIRSKELQTIAKSLGLPIIGKKQEIYKRIEGYF.

The protein belongs to the UPF0746 family.

This Dictyostelium discoideum (Social amoeba) protein is UPF0746 protein DDB_G0281301.